Reading from the N-terminus, the 262-residue chain is Phosphatidylglycerol--prolipoprotein diacylglyceryl transferase (262 aa).

4 consecutive transmembrane segments (helical) span residues 9 to 29, 41 to 61, 80 to 100, and 109 to 129; these read LGPLAIRWYALCIVTGLILAV, IIPDDILDFILVAFPLAILGA, IFAIWNGGLAIYGGLITGALV, and LINTWDFLDIAAPSVMIAQSL. Residue R131 participates in a 1,2-diacyl-sn-glycero-3-phospho-(1'-sn-glycerol) binding. The next 3 helical transmembrane spans lie at 167–187, 197–217, and 226–246; these read QPTFLYESLWNLLGFALILIF, GHITAFYLIWYGFGRMVIEGM, and GLRVSQWLSVVFIGLGIMIVI.

The protein belongs to the Lgt family.

Its subcellular location is the cell membrane. The catalysed reaction is L-cysteinyl-[prolipoprotein] + a 1,2-diacyl-sn-glycero-3-phospho-(1'-sn-glycerol) = an S-1,2-diacyl-sn-glyceryl-L-cysteinyl-[prolipoprotein] + sn-glycerol 1-phosphate + H(+). It participates in protein modification; lipoprotein biosynthesis (diacylglyceryl transfer). Catalyzes the transfer of the diacylglyceryl group from phosphatidylglycerol to the sulfhydryl group of the N-terminal cysteine of a prolipoprotein, the first step in the formation of mature lipoproteins. This Streptococcus pneumoniae (strain ATCC 700669 / Spain 23F-1) protein is Phosphatidylglycerol--prolipoprotein diacylglyceryl transferase.